A 317-amino-acid polypeptide reads, in one-letter code: Ribosomal lysine N-methyltransferase 5 (317 aa).

Residues tryptophan 87, 141 to 143 (GSG), aspartate 163, tryptophan 214, and leucine 237 contribute to the S-adenosyl-L-methionine site.

The protein belongs to the class I-like SAM-binding methyltransferase superfamily. RKM5 family.

Its function is as follows. S-adenosyl-L-methionine-dependent protein-lysine N-methyltransferase that methylates 60S ribosomal protein L1. This Eremothecium gossypii (strain ATCC 10895 / CBS 109.51 / FGSC 9923 / NRRL Y-1056) (Yeast) protein is Ribosomal lysine N-methyltransferase 5 (RKM5).